Consider the following 251-residue polypeptide: Maleate isomerase (251 aa).

Residues Asn15, 81–83 (CLV), Tyr138, and Asn168 contribute to the substrate site. Catalysis depends on Cys81, which acts as the Nucleophile. Cys81 is modified (S-(2-succinyl)cysteine). Residue Cys199 is the Proton donor of the active site. A substrate-binding site is contributed by 200–201 (VQ).

This sequence belongs to the maleate isomerase family. As to quaternary structure, homodimer.

It carries out the reaction maleate = fumarate. Its function is as follows. Catalyzes cis-trans isomerization of the C2-C3 double bond in maleate to yield fumarate. The polypeptide is Maleate isomerase (Geobacillus stearothermophilus (Bacillus stearothermophilus)).